A 68-amino-acid chain; its full sequence is Amphipathic peptide OcyC1 (68 aa).

An N-terminal signal peptide occupies residues 1 to 23; that stretch reads MKAQLCILLIALVLFQTFSQSDA. Phenylalanine 36 carries the phenylalanine amide modification. A propeptide spanning residues 38–68 is cleaved from the precursor; the sequence is RRGLNDLDDLDELFDGEISQADVDFLNELMR.

The protein belongs to the non-disulfide-bridged peptide (NDBP) superfamily. Short antimicrobial peptide (group 4) family. Expressed by the venom gland.

Its subcellular location is the secreted. The protein resides in the target cell membrane. Antimicrobial peptide. Inhibits the growth of Gram-positive and Gram-negative bacteria. Shows antifungal activity with MIC values ranging from 12.5 to 25 uM. Also shows an inhibitory activity on C.albicans biofilms at high concentrations. Shows low cytotoxic activity and has weak hemolytic activity. The chain is Amphipathic peptide OcyC1 from Opisthacanthus cayaporum (South American scorpion).